A 144-amino-acid chain; its full sequence is Cell division protein SepF (144 aa).

This sequence belongs to the SepF family. In terms of assembly, homodimer. Interacts with FtsZ.

It is found in the cytoplasm. Cell division protein that is part of the divisome complex and is recruited early to the Z-ring. Probably stimulates Z-ring formation, perhaps through the cross-linking of FtsZ protofilaments. Its function overlaps with FtsA. This Oceanobacillus iheyensis (strain DSM 14371 / CIP 107618 / JCM 11309 / KCTC 3954 / HTE831) protein is Cell division protein SepF.